The sequence spans 324 residues: Integrin-binding sialoprotein (324 aa).

Residues 1–16 (MKTALILLSILGMACA) form the signal peptide. Phosphoserine is present on residues Ser31, Ser67, Ser75, Ser76, and Ser95. Disordered regions lie at residues 60-228 (VQGG…GREL) and 243-263 (QQTTPPPEAYGTTSPPIRKSS). Over residues 66 to 105 (SSEENGDGDSSEEEGEEEETSNEEENNEDSEGNEDQEAEA) the composition is skewed to acidic residues. The span at 106–130 (ENSTLSTLSGVTASYGAETTPQAQT) shows a compositional bias: polar residues. Asn107 carries an N-linked (GlcNAc...) asparagine glycan. Basic and acidic residues predominate over residues 141–154 (KAGDAESRAPKVKE). A Phosphoserine modification is found at Ser155. Over residues 155-179 (SDEEEEEEEEEEENENEEAEVDENE) the composition is skewed to acidic residues. Residues Asn183, Asn188, and Asn196 are each glycosylated (N-linked (GlcNAc...) asparagine). Residues 203–213 (NGEEAEAEEAS) show a composition bias toward acidic residues. Over residues 253 to 263 (GTTSPPIRKSS) the composition is skewed to polar residues. The short motif at 293 to 295 (RGD) is the Integrin-binding motif element. Residues Tyr320 and Tyr321 each carry the sulfotyrosine modification.

In terms of assembly, monomer. Interacts with integrins; the interaction promotes cell adhesion.

The protein resides in the secreted. In terms of biological role, binds tightly to hydroxyapatite. Appears to form an integral part of the mineralized matrix. Probably important to cell-matrix interaction. Promotes adhesion and migration of various cells via the alpha-V/beta-3 integrin receptor (ITGAV:ITGB3). The chain is Integrin-binding sialoprotein (Ibsp) from Mus musculus (Mouse).